A 364-amino-acid polypeptide reads, in one-letter code: tRNA N6-adenosine threonylcarbamoyltransferase (364 aa).

Fe cation contacts are provided by His115 and His119. Residues 137–141, Asp170, Gly183, and Asn288 contribute to the substrate site; that span reads LVSGG. Residue Asp316 coordinates Fe cation.

Belongs to the KAE1 / TsaD family. The cofactor is Fe(2+).

The protein resides in the cytoplasm. It carries out the reaction L-threonylcarbamoyladenylate + adenosine(37) in tRNA = N(6)-L-threonylcarbamoyladenosine(37) in tRNA + AMP + H(+). Its function is as follows. Required for the formation of a threonylcarbamoyl group on adenosine at position 37 (t(6)A37) in tRNAs that read codons beginning with adenine. Is involved in the transfer of the threonylcarbamoyl moiety of threonylcarbamoyl-AMP (TC-AMP) to the N6 group of A37, together with TsaE and TsaB. TsaD likely plays a direct catalytic role in this reaction. The protein is tRNA N6-adenosine threonylcarbamoyltransferase of Bartonella bacilliformis (strain ATCC 35685 / KC583 / Herrer 020/F12,63).